The sequence spans 1293 residues: Phosphoribosylformylglycinamidine synthase (1293 aa).

ATP is bound by residues 305–316 and Ala-676; that span reads GAATGSGGEIRD. The tract at residues 305–328 is disordered; sequence GAATGSGGEIRDEGATGRGSKPKA. Residues Asp-677, Glu-716, Asn-720, and Asp-884 each contribute to the Mg(2+) site. Ser-886 is a binding site for ATP. The region spanning 1040 to 1293 is the Glutamine amidotransferase type-1 domain; the sequence is MAILREQGVN…MFRNARVNLG (254 aa). The Nucleophile role is filled by Cys-1133. Active-site residues include His-1258 and Glu-1260.

The protein in the N-terminal section; belongs to the FGAMS family. In terms of assembly, monomer.

The protein localises to the cytoplasm. The enzyme catalyses N(2)-formyl-N(1)-(5-phospho-beta-D-ribosyl)glycinamide + L-glutamine + ATP + H2O = 2-formamido-N(1)-(5-O-phospho-beta-D-ribosyl)acetamidine + L-glutamate + ADP + phosphate + H(+). It participates in purine metabolism; IMP biosynthesis via de novo pathway; 5-amino-1-(5-phospho-D-ribosyl)imidazole from N(2)-formyl-N(1)-(5-phospho-D-ribosyl)glycinamide: step 1/2. In terms of biological role, phosphoribosylformylglycinamidine synthase involved in the purines biosynthetic pathway. Catalyzes the ATP-dependent conversion of formylglycinamide ribonucleotide (FGAR) and glutamine to yield formylglycinamidine ribonucleotide (FGAM) and glutamate. The polypeptide is Phosphoribosylformylglycinamidine synthase (Shewanella sp. (strain MR-7)).